Here is a 440-residue protein sequence, read N- to C-terminus: MKPIIAIVGRPNVGKSTLFNRLVGRRKAMVDDMPGVTRDRNYAEVNRFDVPFILVDTGGFEPETSDRLLQQMREQSRFAMDEADLILFIMDARGGLTPADRDVVDMLRRINKPVFYIINKVDGEKQEAEAGDFYSLGVDHIHTISAEHNRGVGDLMDEVLAAIPYDREKELDEEITRIAVVGRPNVGKSTLVNRLLGYERVVANPTAGTTRDAVDTRFTVNKKPYLLIDTAGIRRKGKTVQKVEKYSVMDALRSIERADVVLIVLNAEEGVTEQDSKIAGYAYEAGRGCIFVVNKWDTLAKDNSSIAKFTEEIRRNFKYLPFAPILFVSAETGQRTGKIIAEVDQVMEQYCKRVTTGELNRVFTQAVDENHAPLSAGRRVKFYFATQVAVKPPSFVVFTNCPEGIHFSYERYIMNRFREAFGFNGTPLKLIFRGRDKKDA.

EngA-type G domains are found at residues 3 to 167 (PIIA…PYDR) and 176 to 351 (TRIA…EQYC). GTP-binding positions include 9-16 (GRPNVGKS), 56-60 (DTGGF), 119-122 (NKVD), 182-189 (GRPNVGKS), 229-233 (DTAGI), and 294-297 (NKWD). One can recognise a KH-like domain in the interval 352 to 436 (KRVTTGELNR…PLKLIFRGRD (85 aa)).

This sequence belongs to the TRAFAC class TrmE-Era-EngA-EngB-Septin-like GTPase superfamily. EngA (Der) GTPase family. As to quaternary structure, associates with the 50S ribosomal subunit.

Its function is as follows. GTPase that plays an essential role in the late steps of ribosome biogenesis. The sequence is that of GTPase Der from Citrifermentans bemidjiense (strain ATCC BAA-1014 / DSM 16622 / JCM 12645 / Bem) (Geobacter bemidjiensis).